The following is a 104-amino-acid chain: Large ribosomal subunit protein bL21 (104 aa).

Belongs to the bacterial ribosomal protein bL21 family. Part of the 50S ribosomal subunit. Contacts protein L20.

In terms of biological role, this protein binds to 23S rRNA in the presence of protein L20. The chain is Large ribosomal subunit protein bL21 from Leptospira borgpetersenii serovar Hardjo-bovis (strain JB197).